Reading from the N-terminus, the 264-residue chain is Merozoite surface protein 2 (264 aa).

A signal peptide spans 1–20 (MKVIKTLSIINFFIFVTFNI). 2 N-linked (GlcNAc...) asparagine glycosylation sites follow: Asn-22 and Asn-36. A polymorphic region region spans residues 44-190 (ANEGSNTNSV…PQTAENENPA (147 aa)). A disordered region spans residues 46–225 (EGSNTNSVGA…DSQKECTDGN (180 aa)). Repeat copies occupy residues 60–91 (ADTI…TPTA) and 92–123 (ADTI…TPTA). The interval 60-123 (ADTIASGSQR…GESQTTTPTA (64 aa)) is 2 X 32 AA perfects repeats. Residues 70–81 (STNSASTSTTNN) are compositionally biased toward low complexity. Positions 82–101 (GESQTTTPTAADTIASGSQR) are enriched in polar residues. Low complexity predominate over residues 102-145 (STNSASTSTTNNGESQTTTPTAADTPTTTESNSPSPPITTTESS). N-linked (GlcNAc...) asparagine glycosylation occurs at Asn-152. The span at 154–166 (TDGKGEESEKQNE) shows a compositional bias: basic and acidic residues. 2 N-linked (GlcNAc...) asparagine glycosylation sites follow: Asn-168 and Asn-213. The cysteines at positions 221 and 229 are disulfide-linked. Residues Asn-237 and Asn-238 are each glycosylated (N-linked (GlcNAc...) asparagine). A lipid anchor (GPI-anchor amidated asparagine) is attached at Asn-238. The propeptide at 239 to 264 (SSNIASINKFVVLISATLVLSFAIFI) is removed in mature form.

The protein resides in the cell membrane. Functionally, may play a role in the merozoite attachment to the erythrocyte. The sequence is that of Merozoite surface protein 2 from Plasmodium falciparum (isolate fid3 / India).